A 382-amino-acid polypeptide reads, in one-letter code: Apolipoprotein A-IV (382 aa).

An N-terminal signal peptide occupies residues 1–20 (MFLKAVVLSLALVAVTGARA). 13 tandem repeats follow at residues 33-54 (DYFS…KSEL), 60-81 (TLFQ…KKLV), 82-103 (PFAT…EEIR), 115-136 (PHAT…QRLG), 137-158 (PFTG…RQLK), 159-180 (PYAE…ASVA), 181-202 (PYAD…GSLT), 203-224 (PYAE…RSLA), 225-246 (PYAQ…FQMK), 247-268 (KQAE…QKLV), 269-286 (PVAE…EGLQ), 287-308 (KSLL…LKVE), and 309-330 (PYGE…QKLG). The interval 33–330 (DYFSQLGSNA…QVEDLRQKLG (298 aa)) is 13 X 22 AA approximate tandem repeats. The interval 361 to 382 (EASQGQSQALPAQEKAQAPLEG) is disordered.

It belongs to the apolipoprotein A1/A4/E family. Homodimer. In terms of tissue distribution, secreted in plasma.

It localises to the secreted. In terms of biological role, may have a role in chylomicrons and VLDL secretion and catabolism. Required for efficient activation of lipoprotein lipase by ApoC-II; potent activator of LCAT. Apoa-IV is a major component of HDL and chylomicrons. The sequence is that of Apolipoprotein A-IV (APOA4) from Sus scrofa (Pig).